Here is a 485-residue protein sequence, read N- to C-terminus: Glutamyl-tRNA(Gln) amidotransferase subunit A (485 aa).

Residues Lys-78 and Ser-153 each act as charge relay system in the active site. The active-site Acyl-ester intermediate is Ser-177.

The protein belongs to the amidase family. GatA subfamily. Heterotrimer of A, B and C subunits.

The catalysed reaction is L-glutamyl-tRNA(Gln) + L-glutamine + ATP + H2O = L-glutaminyl-tRNA(Gln) + L-glutamate + ADP + phosphate + H(+). In terms of biological role, allows the formation of correctly charged Gln-tRNA(Gln) through the transamidation of misacylated Glu-tRNA(Gln) in organisms which lack glutaminyl-tRNA synthetase. The reaction takes place in the presence of glutamine and ATP through an activated gamma-phospho-Glu-tRNA(Gln). The chain is Glutamyl-tRNA(Gln) amidotransferase subunit A from Lawsonia intracellularis (strain PHE/MN1-00).